Here is a 492-residue protein sequence, read N- to C-terminus: Uridine-cytidine kinase D (492 aa).

Residues Pro36–Arg56 are disordered. Gly117–Thr124 provides a ligand contact to ATP. A CYTH domain is found at Glu290–Lys460. A compositionally biased stretch (low complexity) spans Pro468–Leu483. Residues Pro468–Leu492 form a disordered region.

This sequence belongs to the uridine kinase family.

The enzyme catalyses uridine + ATP = UMP + ADP + H(+). The catalysed reaction is cytidine + ATP = CMP + ADP + H(+). It functions in the pathway pyrimidine metabolism; CTP biosynthesis via salvage pathway; CTP from cytidine: step 1/3. The protein operates within pyrimidine metabolism; UMP biosynthesis via salvage pathway; UMP from uridine: step 1/1. Catalyzes the conversion of uridine into uridine monophosphate and cytidine into cytidine monophosphate in the pyrimidine salvage pathway. This is Uridine-cytidine kinase D (udkD) from Dictyostelium discoideum (Social amoeba).